Here is a 309-residue protein sequence, read N- to C-terminus: MTTFLPIIFSSLVVVIFVIGNFANGFIALVNSIEWFKXQKISFADQILTALAVSRVGLLWVLLLNWYSTVLNPAFYSVEVRTTAYNVWAVTGHFSNWLATSLSIFYLLKIANFSNFIFLHLKRRVKSVILVMLLGPLLFLACQLFMINMKEIVRTKEYEGNMTWKIKLRSAVYLSDATVTTLGNLVPFTLTLLCFLLLICSLCKHLKKMQLHGKGSQDPSTKVHIKVLQTVISFLLLCAIYFLSIMISVWSFGSLKNKPVFMFCKAIRFSYPSIHPFILIWGNKKLKQTFLSVLRQVRYWVKGEKPSSP.

The Extracellular segment spans residues 1-2 (MT). A helical transmembrane segment spans residues 3-23 (TFLPIIFSSLVVVIFVIGNFA). Topologically, residues 24–55 (NGFIALVNSIEWFKXQKISFADQILTALAVSR) are cytoplasmic. A helical transmembrane segment spans residues 56-76 (VGLLWVLLLNWYSTVLNPAFY). Residues 77 to 100 (SVEVRTTAYNVWAVTGHFSNWLAT) are Extracellular-facing. A helical membrane pass occupies residues 101-121 (SLSIFYLLKIANFSNFIFLHL). At 122–126 (KRRVK) the chain is on the cytoplasmic side. A helical membrane pass occupies residues 127-147 (SVILVMLLGPLLFLACQLFMI). At 148–181 (NMKEIVRTKEYEGNMTWKIKLRSAVYLSDATVTT) the chain is on the extracellular side. The N-linked (GlcNAc...) asparagine glycan is linked to Asn-161. The helical transmembrane segment at 182 to 202 (LGNLVPFTLTLLCFLLLICSL) threads the bilayer. Over 203-229 (CKHLKKMQLHGKGSQDPSTKVHIKVLQ) the chain is Cytoplasmic. The helical transmembrane segment at 230-250 (TVISFLLLCAIYFLSIMISVW) threads the bilayer. Residues 251-259 (SFGSLKNKP) are Extracellular-facing. Residues 260–280 (VFMFCKAIRFSYPSIHPFILI) traverse the membrane as a helical segment. The Cytoplasmic portion of the chain corresponds to 281–309 (WGNKKLKQTFLSVLRQVRYWVKGEKPSSP).

Belongs to the G-protein coupled receptor T2R family.

It is found in the membrane. Its function is as follows. Receptor that may play a role in the perception of bitterness and is gustducin-linked. May play a role in sensing the chemical composition of the gastrointestinal content. The activity of this receptor may stimulate alpha gustducin, mediate PLC-beta-2 activation and lead to the gating of TRPM5. The chain is Taste receptor type 2 member 31 (TAS2R31) from Pan paniscus (Pygmy chimpanzee).